Consider the following 449-residue polypeptide: MDKISGFSDDELLVKILSFLPFKFAITTSVLSKQWKFLWMRVPKLEYDEDSMYSFEYSFRYFLPKAKEVDSETYSIVSESGHRMRSFIEKNLPLHSSPVIESLRLKFFTEVFQPEDIKLWVEIAVSRCAQELSVDFFPKEKHNALLPRNLYTCKSLVTLKLRNNILVDVPHVFSLPSLKILHLERVTYGDGESLQRLLSNCSVLEDLVVELDTGDNVRKLDVIIPSLLSLSFGMSRYCAYEGYRIDTPSLKYFKLTDLSKTFSGLIENMPKLEEANITARHNFKKLLELVTSVKRLSLNIENNDAEALTAIYGDDIVFNELEHLNFHIHNAYWSELLYWLLKASPKLQNLEFDEQCSRDGTMGTLAVFWNQPNSVPQCLLSTLQTFEWSGYPGSVQGKDLATYILRKSRQLKIATISIGYGLDPQQKLKMEMDVKFSFRASPTCKRVFY.

Residues 2-50 (DKISGFSDDELLVKILSFLPFKFAITTSVLSKQWKFLWMRVPKLEYDED) form the F-box domain. LRR repeat units lie at residues 27 to 52 (TTSVLSKQWKFLWMRVPKLEYDEDSM), 81 to 107 (GHRMRSFIEKNLPLHSSPVIESLRLKF), 158 to 185 (TLKLRNNILVDVPHVFSLPSLKILHLER), 186 to 211 (VTYGDGESLQRLLSNCSVLEDLVVEL), 252 to 279 (YFKLTDLSKTFSGLIENMPKLEEANITA), and 328 to 354 (IHNAYWSELLYWLLKASPKLQNLEFDE). One can recognise an FBD domain in the interval 368–418 (FWNQPNSVPQCLLSTLQTFEWSGYPGSVQGKDLATYILRKSRQLKIATISI).

This is Putative F-box/FBD/LRR-repeat protein At5g62970 from Arabidopsis thaliana (Mouse-ear cress).